The sequence spans 249 residues: Type I iodothyronine deiodinase (249 aa).

Residues 1 to 12 (MGLPRPGLWLKR) are Extracellular-facing. The chain crosses the membrane as a helical; Signal-anchor for type III membrane protein span at residues 13–33 (LWVLVQVAVEVAVGKVLMTLF). At 34–249 (PERVKQNILA…VRAVLEELHS (216 aa)) the chain is on the cytoplasmic side. Residue Sec-126 is part of the active site. Residue Sec-126 is a non-standard amino acid, selenocysteine.

This sequence belongs to the iodothyronine deiodinase family. As to quaternary structure, predominantly monomer. Can form homodimers but homodimerization is not essential for enzyme activity.

It localises to the cell membrane. The protein resides in the endoplasmic reticulum membrane. It is found in the basolateral cell membrane. The enzyme catalyses 3,3',5-triiodo-L-thyronine + iodide + A + H(+) = L-thyroxine + AH2. It carries out the reaction 3,3',5'-triiodo-L-thyronine + iodide + A + H(+) = L-thyroxine + AH2. The catalysed reaction is 3,3'-diiodo-L-thyronine + iodide + A + H(+) = 3,3',5'-triiodo-L-thyronine + AH2. It catalyses the reaction 3,3'-diiodo-L-thyronine + iodide + A + H(+) = 3,3',5-triiodo-L-thyronine + AH2. The enzyme catalyses 3'-iodo-L-thyronine + iodide + A + H(+) = 3',5'-diiodo-L-thyronine + AH2. It carries out the reaction 3-iodo-L-thyronine + iodide + A + H(+) = 3,5-diiodo-L-thyronine + AH2. The catalysed reaction is 3-iodo-L-thyronine + iodide + A + H(+) = 3,3'-diiodo-L-thyronine + AH2. It catalyses the reaction 3,3'-diiodothyronamine + iodide + A + H(+) = 3,3',5'-triiodothyronamine + AH2. The enzyme catalyses 3'-iodothyronamine + iodide + A + H(+) = 3',5'-diiodothyronamine + AH2. It carries out the reaction 3-iodothyronamine + iodide + A + H(+) = 3,3'-diiodothyronamine + AH2. The catalysed reaction is 3,3'-diiodothyronamine + iodide + A + H(+) = 3,3',5-triiodothyronamine + AH2. It catalyses the reaction 3-iodothyronamine + iodide + A + H(+) = 3,5-diiodothyronamine + AH2. The enzyme catalyses 3,3'-diiodo-L-thyronine sulfate + iodide + A + H(+) = 3,3',5'-triiodo-L-thyronine sulfate + AH2. It carries out the reaction 3,3',5'-triiodo-L-thyronine sulfate + iodide + A + H(+) = L-thyroxine sulfate + AH2. The catalysed reaction is 3,3'-diiodo-L-thyronine sulfate + iodide + A + H(+) = 3,3',5-triiodo-L-thyronine sulfate + AH2. Plays a crucial role in the metabolism of thyroid hormones (TH) and has specific roles in TH activation and inactivation by deiodination. Catalyzes the deiodination of L-thyroxine (T4) to 3,5,3'-triiodothyronine (T3) via outer-ring deiodination (ORD) and of T4 to 3,3',5'-triiodothyronine (rT3) via inner-ring deiodination (IRD). Catalyzes the deiodiantion of rT3 to 3,3'-diiodothyronine (3,3'-T2) and 3',5'-diiodothyronine (3',5'-T2) to 3'-monoiodothyronine (3'-T1) via ORD. Catalyzes the deiodination of T3 to 3,3'-T2, 3,5-diiodothyronine (3,5-T2) to 3-monoiodothyronine (3-T1) and 3,3'-T2 to 3-T1 via IRD. Catalyzes the phenolic ring deiodinations of 3,3',5'-triiodothyronamine, 3',5'-diiodothyronamine and 3,3'-diiodothyronamine as well as tyrosyl ring deiodinations of 3,5,3'-triiodothyronamine and 3,5-diiodothyronamine. Catalyzes the deiodination of L-thyroxine sulfate and 3,3',5-triiodo-L-thyronine sulfate via IRD and of 3,3',5'-triiodo-L-thyronine sulfate via ORD. This is Type I iodothyronine deiodinase (DIO1) from Oryctolagus cuniculus (Rabbit).